A 185-amino-acid polypeptide reads, in one-letter code: Small ribosomal subunit protein uS4 (185 aa).

In terms of domain architecture, S4 RNA-binding spans 107–179 (RRLQTLVYRK…NGRRKRKNNH (73 aa)). A disordered region spans residues 161-185 (NTPLTNPEINGRRKRKNNHAGKEDN).

The protein belongs to the universal ribosomal protein uS4 family.

This Entamoeba histolytica (strain ATCC 30459 / HM-1:IMSS / ABRM) protein is Small ribosomal subunit protein uS4.